An 82-amino-acid polypeptide reads, in one-letter code: Large ribosomal subunit protein bL27 (82 aa).

Positions 1–21 (MAHKKGASSSRNGRDSNAKRL) are disordered.

Belongs to the bacterial ribosomal protein bL27 family.

In Tropheryma whipplei (strain TW08/27) (Whipple's bacillus), this protein is Large ribosomal subunit protein bL27.